We begin with the raw amino-acid sequence, 190 residues long: Hypoxanthine/guanine phosphoribosyltransferase (190 aa).

Belongs to the purine/pyrimidine phosphoribosyltransferase family. Archaeal HPRT subfamily. In terms of assembly, homodimer.

It localises to the cytoplasm. It catalyses the reaction IMP + diphosphate = hypoxanthine + 5-phospho-alpha-D-ribose 1-diphosphate. The catalysed reaction is GMP + diphosphate = guanine + 5-phospho-alpha-D-ribose 1-diphosphate. Its pathway is purine metabolism; IMP biosynthesis via salvage pathway; IMP from hypoxanthine: step 1/1. Catalyzes a salvage reaction resulting in the formation of IMP that is energically less costly than de novo synthesis. The protein is Hypoxanthine/guanine phosphoribosyltransferase of Methanobacterium paludis (strain DSM 25820 / JCM 18151 / SWAN1).